The sequence spans 915 residues: MVQLGKLLRVLTLMKFPCCVLEVLLCVLAAAARGQEMYAPHSIRIEGDVTLGGLFPVHAKGPSGVPCGDIKRENGIHRLEAMLYALDQINSDPNLLPNVTLGARILDTCSRDTYALEQSLTFVQALIQKDTSDVRCTNGEPPVFVKPEKVVGVIGASGSSVSIMVANILRLFQIPQISYASTAPELSDDRRYDFFSRVVPPDSFQAQAMVDIVKALGWNYVSTLASEGSYGEKGVESFTQISKEAGGLCIAQSVRIPQERKDRTIDFDRIIKQLLDTPNSRAVVIFANDEDIKQILAAAKRADQVGHFLWVGSDSWGSKINPLHQHEDIAEGAITIQPKRATVEGFDAYFTSRTLENNRRNVWFAEYWEENFNCKLTISGSKKEDTDRKCTGQERIGKDSNYEQEGKVQFVIDAVYAMAHALHHMNKDLCADYRGVCPEMEQAGGKKLLKYIRHVNFNGSAGTPVMFNKNGDAPGRYDIFQYQTTNTTNPGYRLIGQWTDELQLNIEDMQWGKGVREIPSSVCTLPCKPGQRKKTQKGTPCCWTCEPCDGYQYQFDEMTCQHCPYDQRPNENRTGCQNIPIIKLEWHSPWAVIPVFLAMLGIIATIFVMATFIRYNDTPIVRASGRELSYVLLTGIFLCYIITFLMIAKPDVAVCSFRRVFLGLGMCISYAALLTKTNRIYRIFEQGKKSVTAPRLISPTSQLAITSSLISVQLLGVFIWFGVDPPNIIIDYDEHKTMNPEQARGVLKCDITDLQIICSLGYSILLMVTCTVYAIKTRGVPENFNEAKPIGFTMYTTCIVWLAFIPIFFGTAQSAEKLYIQTTTLTISMNLSASVALGMLYMPKVYIIIFHPELNVQKRKRSFKAVVTAATMSSRLSHKPSDRPNGEAKTELCENVDPNSPAAKKKYVSYNNLVI.

The N-terminal stretch at 1-34 (MVQLGKLLRVLTLMKFPCCVLEVLLCVLAAAARG) is a signal peptide. Residues 35 to 590 (QEMYAPHSIR…IIKLEWHSPW (556 aa)) lie on the Extracellular side of the membrane. A disulfide bond links cysteine 67 and cysteine 109. N-linked (GlcNAc...) asparagine glycosylation is present at asparagine 98. L-glutamate is bound by residues serine 159, 180-182 (AST), tyrosine 230, and aspartate 314. Intrachain disulfides connect cysteine 249–cysteine 541, cysteine 374–cysteine 390, cysteine 430–cysteine 437, cysteine 523–cysteine 542, cysteine 527–cysteine 545, cysteine 548–cysteine 560, and cysteine 563–cysteine 576. Lysine 407 is a binding site for L-glutamate. N-linked (GlcNAc...) asparagine glycans are attached at residues asparagine 458 and asparagine 486. Asparagine 572 carries N-linked (GlcNAc...) asparagine glycosylation. The helical transmembrane segment at 591–615 (AVIPVFLAMLGIIATIFVMATFIRY) threads the bilayer. The Cytoplasmic segment spans residues 616–627 (NDTPIVRASGRE). The helical transmembrane segment at 628–648 (LSYVLLTGIFLCYIITFLMIA) threads the bilayer. Over 649–654 (KPDVAV) the chain is Extracellular. The helical transmembrane segment at 655–675 (CSFRRVFLGLGMCISYAALLT) threads the bilayer. Over 676–702 (KTNRIYRIFEQGKKSVTAPRLISPTSQ) the chain is Cytoplasmic. A helical membrane pass occupies residues 703–723 (LAITSSLISVQLLGVFIWFGV). Residues 724–753 (DPPNIIIDYDEHKTMNPEQARGVLKCDITD) are Extracellular-facing. A helical transmembrane segment spans residues 754-775 (LQIICSLGYSILLMVTCTVYAI). At 776–788 (KTRGVPENFNEAK) the chain is on the cytoplasmic side. The helical transmembrane segment at 789–810 (PIGFTMYTTCIVWLAFIPIFFG) threads the bilayer. Over 811 to 825 (TAQSAEKLYIQTTTL) the chain is Extracellular. A helical transmembrane segment spans residues 826-850 (TISMNLSASVALGMLYMPKVYIIIF). Residues 851–915 (HPELNVQKRK…KYVSYNNLVI (65 aa)) are Cytoplasmic-facing. Residues 874–895 (SRLSHKPSDRPNGEAKTELCEN) are disordered. The segment covering 879–892 (KPSDRPNGEAKTEL) has biased composition (basic and acidic residues). Serine 900 carries the phosphoserine modification.

The protein belongs to the G-protein coupled receptor 3 family. In terms of assembly, homodimer. Interacts with PICK1. Widely distributed throughout the brain.

The protein localises to the cell membrane. G-protein coupled receptor activated by glutamate that regulates axon outgrowth through the MAPK-cAMP-PKA signaling pathway during neuronal development. Ligand binding causes a conformation change that triggers signaling via guanine nucleotide-binding proteins (G proteins) and modulates the activity of downstream effectors, such as adenylate cyclase that it inhibits. This is Metabotropic glutamate receptor 7 (Grm7) from Rattus norvegicus (Rat).